The sequence spans 585 residues: Aspartate--tRNA ligase (585 aa).

Glutamate 169 is an L-aspartate binding site. The interval 193 to 196 is aspartate; sequence QLFK. Arginine 215 provides a ligand contact to L-aspartate. Residues 215 to 217 and glutamine 224 contribute to the ATP site; that span reads RDE. Histidine 443 is a binding site for L-aspartate. ATP is bound at residue glutamate 478. An L-aspartate-binding site is contributed by arginine 485. 530–533 contributes to the ATP binding site; the sequence is GLDR.

Belongs to the class-II aminoacyl-tRNA synthetase family. Type 1 subfamily. In terms of assembly, homodimer.

The protein resides in the cytoplasm. It carries out the reaction tRNA(Asp) + L-aspartate + ATP = L-aspartyl-tRNA(Asp) + AMP + diphosphate. Catalyzes the attachment of L-aspartate to tRNA(Asp) in a two-step reaction: L-aspartate is first activated by ATP to form Asp-AMP and then transferred to the acceptor end of tRNA(Asp). The sequence is that of Aspartate--tRNA ligase from Pseudothermotoga lettingae (strain ATCC BAA-301 / DSM 14385 / NBRC 107922 / TMO) (Thermotoga lettingae).